A 431-amino-acid chain; its full sequence is Enolase (431 aa).

Q168 is a binding site for (2R)-2-phosphoglycerate. The Proton donor role is filled by E210. Residues D247, E291, and D318 each coordinate Mg(2+). Residues K343, R372, S373, and K394 each coordinate (2R)-2-phosphoglycerate. K343 acts as the Proton acceptor in catalysis.

It belongs to the enolase family. In terms of assembly, component of the RNA degradosome, a multiprotein complex involved in RNA processing and mRNA degradation. Mg(2+) is required as a cofactor.

The protein resides in the cytoplasm. The protein localises to the secreted. It localises to the cell surface. The catalysed reaction is (2R)-2-phosphoglycerate = phosphoenolpyruvate + H2O. Its pathway is carbohydrate degradation; glycolysis; pyruvate from D-glyceraldehyde 3-phosphate: step 4/5. Catalyzes the reversible conversion of 2-phosphoglycerate (2-PG) into phosphoenolpyruvate (PEP). It is essential for the degradation of carbohydrates via glycolysis. The chain is Enolase from Acinetobacter baumannii (strain AYE).